Reading from the N-terminus, the 211-residue chain is Large ribosomal subunit protein bL25 (211 aa).

The span at 1-18 (MAKTHEIKAERRADEGKG) shows a compositional bias: basic and acidic residues. Residues 1–20 (MAKTHEIKAERRADEGKGAS) form a disordered region.

Belongs to the bacterial ribosomal protein bL25 family. CTC subfamily. As to quaternary structure, part of the 50S ribosomal subunit; part of the 5S rRNA/L5/L18/L25 subcomplex. Contacts the 5S rRNA. Binds to the 5S rRNA independently of L5 and L18.

This is one of the proteins that binds to the 5S RNA in the ribosome where it forms part of the central protuberance. In Xanthomonas oryzae pv. oryzae (strain MAFF 311018), this protein is Large ribosomal subunit protein bL25.